The sequence spans 616 residues: Probable Xaa-Pro aminopeptidase P (616 aa).

Mn(2+) is bound by residues Asp-413, Asp-424, Glu-522, and Glu-536.

Belongs to the peptidase M24B family. The cofactor is Mn(2+).

It carries out the reaction Release of any N-terminal amino acid, including proline, that is linked to proline, even from a dipeptide or tripeptide.. Its function is as follows. Catalyzes the removal of a penultimate prolyl residue from the N-termini of peptides. The polypeptide is Probable Xaa-Pro aminopeptidase P (AMPP) (Paracoccidioides brasiliensis (strain Pb03)).